Consider the following 274-residue polypeptide: Undecaprenyl-diphosphatase 1 (274 aa).

8 consecutive transmembrane segments (helical) span residues 4 to 24, 45 to 65, 84 to 104, 111 to 131, 146 to 166, 186 to 206, 217 to 237, and 249 to 269; these read LLLL…FLPI, SAVF…YEYW, HLAI…LSFG, LFND…IMWI, IGLK…IPGT, ATEF…LLDL, FDWS…LLLI, and FMVF…FAYT.

This sequence belongs to the UppP family.

The protein localises to the cell inner membrane. It carries out the reaction di-trans,octa-cis-undecaprenyl diphosphate + H2O = di-trans,octa-cis-undecaprenyl phosphate + phosphate + H(+). Functionally, catalyzes the dephosphorylation of undecaprenyl diphosphate (UPP). Confers resistance to bacitracin. This Acinetobacter baylyi (strain ATCC 33305 / BD413 / ADP1) protein is Undecaprenyl-diphosphatase 1.